A 262-amino-acid polypeptide reads, in one-letter code: Hydroxyethylthiazole kinase (262 aa).

Substrate is bound at residue M44. R118 and T166 together coordinate ATP. Residue G193 coordinates substrate.

Belongs to the Thz kinase family. Mg(2+) serves as cofactor.

The catalysed reaction is 5-(2-hydroxyethyl)-4-methylthiazole + ATP = 4-methyl-5-(2-phosphooxyethyl)-thiazole + ADP + H(+). It functions in the pathway cofactor biosynthesis; thiamine diphosphate biosynthesis; 4-methyl-5-(2-phosphoethyl)-thiazole from 5-(2-hydroxyethyl)-4-methylthiazole: step 1/1. Its function is as follows. Catalyzes the phosphorylation of the hydroxyl group of 4-methyl-5-beta-hydroxyethylthiazole (THZ). The protein is Hydroxyethylthiazole kinase of Chlamydia felis (strain Fe/C-56) (Chlamydophila felis).